A 47-amino-acid polypeptide reads, in one-letter code: QAIGLPHTACIQCNRKTSSKCLSGQICLPYHMTCYTLYKPDENGELK.

The residue at position 1 (Gln-1) is a Pyrrolidone carboxylic acid. 2 cysteine pairs are disulfide-bonded: Cys-10/Cys-34 and Cys-13/Cys-21.

In terms of assembly, monomer. As to expression, expressed by the venom gland.

The protein resides in the secreted. In terms of biological role, this toxin may inhibit nicotinic acetylcholine receptor (nAChR). It has poorly reversible postsynaptic blocking activity in a chick muscle preparation and readily reversible inhibitory activity at a presynaptic site in the rat vas deferens prostatic segment most likely to prevent the release of neurotransmitters. In Boiga dendrophila (Mangrove snake), this protein is Boigatoxin-A.